Here is a 443-residue protein sequence, read N- to C-terminus: Transmembrane protein 184C (443 aa).

7 helical membrane-spanning segments follow: residues 15–35, 46–66, 84–104, 182–202, 210–230, 252–272, and 284–304; these read LVVL…IWKL, AWFI…WGIL, ILWM…YPDI, PVTT…EGDF, YLVI…VLFY, VVFV…AGVI, and VATG…AVAH. Polar residues predominate over residues 369 to 378; the sequence is TSLLSSSTQD. The segment at 369–422 is disordered; it reads TSLLSSSTQDPISAASSIPPSPSGHYQGFGQTITPQTTPTATTMPEELYSADSP. The segment covering 399-411 has biased composition (low complexity); that stretch reads QTITPQTTPTATT.

Belongs to the TMEM184 family.

Its subcellular location is the membrane. In terms of biological role, may play a role in cell growth. This is Transmembrane protein 184C (tmem184c) from Xenopus tropicalis (Western clawed frog).